A 498-amino-acid polypeptide reads, in one-letter code: DEAD-box ATP-dependent RNA helicase 12 (498 aa).

The interval 1 to 114 is disordered; that stretch reads MNTNRGRYPP…RLPPPDTRYQ (114 aa). Residues 27 to 65 are compositionally biased toward low complexity; it reads SYRQQQPPQDQQYVQRGYSQNPQQMQLQQQHQQQQQQQQ. A compositionally biased stretch (polar residues) spans 74–96; it reads GNASNANEVVQQTTQPEASSDAN. The Q motif signature appears at 124-152; sequence NEFEDYFLKRDLLKGIYEKGFEKPSPIQE. A Helicase ATP-binding domain is found at 155 to 325; it reads IPIALTGSDI…DRHLRKPYVI (171 aa). 168-175 lines the ATP pocket; it reads AKNGTGKT. A Phosphothreonine modification is found at T230. A DEAD box motif is present at residues 273–276; that stretch reads DEAD. Positions 335–495 constitute a Helicase C-terminal domain; that stretch reads GVTQYYAFVE…PIPSNIDQAI (161 aa).

Belongs to the DEAD box helicase family. DDX6/DHH1 subfamily.

The protein resides in the cytoplasm. The protein localises to the P-body. The enzyme catalyses ATP + H2O = ADP + phosphate + H(+). Functionally, ATP-dependent RNA helicase involved in mRNA turnover, and more specifically in mRNA decapping. The chain is DEAD-box ATP-dependent RNA helicase 12 (RH12) from Arabidopsis thaliana (Mouse-ear cress).